Consider the following 477-residue polypeptide: Bifunctional protein HldE (477 aa).

Residues 1-318 (MKVNLPAFER…ENAVRGRAAT (318 aa)) form a ribokinase region. 195-198 (NLSE) serves as a coordination point for ATP. Residue aspartate 264 is part of the active site. Positions 344-477 (MTNGVFDILH…IKKIQTESEK (134 aa)) are cytidylyltransferase.

It in the N-terminal section; belongs to the carbohydrate kinase PfkB family. In the C-terminal section; belongs to the cytidylyltransferase family. As to quaternary structure, homodimer.

It catalyses the reaction D-glycero-beta-D-manno-heptose 7-phosphate + ATP = D-glycero-beta-D-manno-heptose 1,7-bisphosphate + ADP + H(+). It carries out the reaction D-glycero-beta-D-manno-heptose 1-phosphate + ATP + H(+) = ADP-D-glycero-beta-D-manno-heptose + diphosphate. The protein operates within nucleotide-sugar biosynthesis; ADP-L-glycero-beta-D-manno-heptose biosynthesis; ADP-L-glycero-beta-D-manno-heptose from D-glycero-beta-D-manno-heptose 7-phosphate: step 1/4. It functions in the pathway nucleotide-sugar biosynthesis; ADP-L-glycero-beta-D-manno-heptose biosynthesis; ADP-L-glycero-beta-D-manno-heptose from D-glycero-beta-D-manno-heptose 7-phosphate: step 3/4. Catalyzes the phosphorylation of D-glycero-D-manno-heptose 7-phosphate at the C-1 position to selectively form D-glycero-beta-D-manno-heptose-1,7-bisphosphate. In terms of biological role, catalyzes the ADP transfer from ATP to D-glycero-beta-D-manno-heptose 1-phosphate, yielding ADP-D-glycero-beta-D-manno-heptose. The polypeptide is Bifunctional protein HldE (Salmonella arizonae (strain ATCC BAA-731 / CDC346-86 / RSK2980)).